The primary structure comprises 89 residues: Small ribosomal subunit protein uS17 (89 aa).

Belongs to the universal ribosomal protein uS17 family. As to quaternary structure, part of the 30S ribosomal subunit.

In terms of biological role, one of the primary rRNA binding proteins, it binds specifically to the 5'-end of 16S ribosomal RNA. The polypeptide is Small ribosomal subunit protein uS17 (Ralstonia pickettii (strain 12J)).